A 60-amino-acid chain; its full sequence is Large ribosomal subunit protein uL30 (60 aa).

It belongs to the universal ribosomal protein uL30 family. In terms of assembly, part of the 50S ribosomal subunit.

This is Large ribosomal subunit protein uL30 from Levilactobacillus brevis (strain ATCC 367 / BCRC 12310 / CIP 105137 / JCM 1170 / LMG 11437 / NCIMB 947 / NCTC 947) (Lactobacillus brevis).